A 310-amino-acid polypeptide reads, in one-letter code: Ribosomal RNA small subunit methyltransferase H (310 aa).

S-adenosyl-L-methionine is bound by residues 32–34 (GGH), Asp-52, Phe-79, Asp-100, and Gln-107.

It belongs to the methyltransferase superfamily. RsmH family.

Its subcellular location is the cytoplasm. The catalysed reaction is cytidine(1402) in 16S rRNA + S-adenosyl-L-methionine = N(4)-methylcytidine(1402) in 16S rRNA + S-adenosyl-L-homocysteine + H(+). Functionally, specifically methylates the N4 position of cytidine in position 1402 (C1402) of 16S rRNA. The protein is Ribosomal RNA small subunit methyltransferase H of Bacillus cereus (strain G9842).